Here is a 492-residue protein sequence, read N- to C-terminus: MNTQHSKTDVILIGGGIMSATLGTLLKELTPEKDIQLFERLSQPGEESSNVWNNAGTGHSALCELNYTKEGKDGSVDITKAIHINEQFQISKQFWAYLIREGHIESPDKFIQSVPHMSFVKGEENVKFLKSRVASLQKNVLFEKMKISQDPEKINSWVPLMMEGRQSDEAIAITYDETGTDVNFGALTKKLIANLQQKNVGINYKHEVLDIKKLNNGNWQVVVKDLNTSNVMNYESKFVFIGAGGASLPLLQKTKIKESKHIGGFPVSGLFLRCKNPDVIHRHHAKVYGKAEVGAPPMSVPHLDTRFVNGEKSLLFGPFAGFSPKFLKNGSYLDLVKSVKPNNMITMLSAGVKEFNLTKYLVSQLMLSNEERINDLRVFLPEAKDEDWEVITAGQRVQVIKDTDKSKGQLQFGTEVITSEDGSLAALLGASPGASTAVDIMFDVLQRCYKSEFKSWEPKIKEMVPSFGLKLSEHEDMYHSINEEVKKYLNVK.

Belongs to the MQO family. It depends on FAD as a cofactor.

The enzyme catalyses (S)-malate + a quinone = a quinol + oxaloacetate. The protein operates within carbohydrate metabolism; tricarboxylic acid cycle; oxaloacetate from (S)-malate (quinone route): step 1/1. This Staphylococcus epidermidis (strain ATCC 35984 / DSM 28319 / BCRC 17069 / CCUG 31568 / BM 3577 / RP62A) protein is Probable malate:quinone oxidoreductase 1.